We begin with the raw amino-acid sequence, 420 residues long: Napsin-A (420 aa).

An N-terminal signal peptide occupies residues 1–25 (MSPPPLLQPLLLLLPLLNVEPSGAT). A propeptide spans 26-63 (LIRIPLHRVQPGRRILNLLRGWREPAELPKLGAPSPGD) (activation peptide). Residues 78 to 399 (YFGEIGLGTP…MKSSARVGLA (322 aa)) form the Peptidase A1 domain. The N-linked (GlcNAc...) asparagine glycan is linked to asparagine 90. The active site involves aspartate 96. Cysteines 109 and 116 form a disulfide. A glycan (N-linked (GlcNAc...) asparagine) is linked at asparagine 133. Cysteine 274 and cysteine 278 are disulfide-bonded. Aspartate 283 is an active-site residue. Cysteine 317 and cysteine 354 are oxidised to a cystine. A glycan (N-linked (GlcNAc...) asparagine) is linked at asparagine 336.

Belongs to the peptidase A1 family. As to expression, expressed predominantly in adult lung (type II pneumocytes) and kidney and in fetal lung. Low levels in adult spleen and very low levels in peripheral blood leukocytes.

It localises to the secreted. Functionally, may be involved in processing of pneumocyte surfactant precursors. In Homo sapiens (Human), this protein is Napsin-A (NAPSA).